The following is an 868-amino-acid chain: DNA replication licensing factor MCM2 (868 aa).

Disordered regions lie at residues 1–65 (MSDN…DEVE) and 87–106 (NRDRYDPDQVDDREQQELSL). A phosphoserine mark is found at Ser-14, Ser-16, and Ser-23. Residues 49–65 (EGDDNEVDDVPDIDEVE) show a composition bias toward acidic residues. Phosphoserine occurs at positions 164 and 170. A C4-type zinc finger spans residues 341–367 (CLKCGSILGPFFQDSNEEIRISFCTNC). The MCM domain maps to 493-700 (IIDKIISSMA…ADERLATFVV (208 aa)). An ATP-binding site is contributed by 543–550 (GDPGTAKS). The Arginine finger signature appears at 675 to 678 (SRFD). Residues 704-728 (VRSHPENDEDREGEELKNNGESAIE) form a disordered region.

It belongs to the MCM family. As to quaternary structure, component of the MCM2-7 complex. The complex forms a toroidal hexameric ring with the proposed subunit order MCM2-MCM6-MCM4-MCM7-MCM3-MCM5; loaded onto DNA, forms a head-head double hexamer.

It is found in the nucleus. The catalysed reaction is ATP + H2O = ADP + phosphate + H(+). In terms of biological role, acts as a component of the MCM2-7 complex (MCM complex) which is the putative replicative helicase essential for 'once per cell cycle' DNA replication initiation and elongation in eukaryotic cells. The active ATPase sites in the MCM2-7 ring are formed through the interaction surfaces of two neighboring subunits such that a critical structure of a conserved arginine finger motif is provided in trans relative to the ATP-binding site of the Walker A box of the adjacent subunit. The six ATPase active sites, however, are likely to contribute differentially to the complex helicase activity; specifically the MCM2-MCM5 association is proposed to be reversible and to mediate a open ring conformation which may facilitate DNA loading. Once loaded onto DNA, double hexamers can slide on dsDNA in the absence of ATPase activity. Necessary for cell growth. This Saccharomyces cerevisiae (strain ATCC 204508 / S288c) (Baker's yeast) protein is DNA replication licensing factor MCM2 (MCM2).